Here is a 382-residue protein sequence, read N- to C-terminus: Methylthioribose-1-phosphate isomerase (382 aa).

Aspartate 258 (proton donor) is an active-site residue.

This sequence belongs to the eIF-2B alpha/beta/delta subunits family. MtnA subfamily.

Its subcellular location is the cytoplasm. It localises to the nucleus. The catalysed reaction is 5-(methylsulfanyl)-alpha-D-ribose 1-phosphate = 5-(methylsulfanyl)-D-ribulose 1-phosphate. Its pathway is amino-acid biosynthesis; L-methionine biosynthesis via salvage pathway; L-methionine from S-methyl-5-thio-alpha-D-ribose 1-phosphate: step 1/6. Functionally, catalyzes the interconversion of methylthioribose-1-phosphate (MTR-1-P) into methylthioribulose-1-phosphate (MTRu-1-P). This is Methylthioribose-1-phosphate isomerase from Laccaria bicolor (strain S238N-H82 / ATCC MYA-4686) (Bicoloured deceiver).